We begin with the raw amino-acid sequence, 290 residues long: Pyridoxal kinase PdxY (290 aa).

Substrate-binding positions include Ser12 and 47-48 (TQ). Residues Asp114, Glu151, Lys184, and 211–214 (RPLL) each bind ATP. Asp225 lines the substrate pocket.

The protein belongs to the pyridoxine kinase family. PdxY subfamily. Homodimer. Mg(2+) is required as a cofactor.

The enzyme catalyses pyridoxal + ATP = pyridoxal 5'-phosphate + ADP + H(+). It functions in the pathway cofactor metabolism; pyridoxal 5'-phosphate salvage; pyridoxal 5'-phosphate from pyridoxal: step 1/1. In terms of biological role, pyridoxal kinase involved in the salvage pathway of pyridoxal 5'-phosphate (PLP). Catalyzes the phosphorylation of pyridoxal to PLP. In Pseudomonas entomophila (strain L48), this protein is Pyridoxal kinase PdxY.